We begin with the raw amino-acid sequence, 499 residues long: Cytochrome P450 11B1, mitochondrial (499 aa).

A mitochondrion-targeting transit peptide spans 1 to 24 (MALRVTADVWLARPWQCLHRTRAL). Residue Cys-446 participates in heme binding.

The protein belongs to the cytochrome P450 family. It depends on heme as a cofactor. In terms of tissue distribution, adrenal zona fasciculata/reticularis.

The protein localises to the mitochondrion inner membrane. It catalyses the reaction a steroid + 2 reduced [adrenodoxin] + O2 + 2 H(+) = an 11beta-hydroxysteroid + 2 oxidized [adrenodoxin] + H2O. It carries out the reaction 21-hydroxyprogesterone + 2 reduced [adrenodoxin] + O2 + 2 H(+) = corticosterone + 2 oxidized [adrenodoxin] + H2O. The enzyme catalyses 21-hydroxyprogesterone + 2 reduced [adrenodoxin] + O2 + 2 H(+) = 18-hydroxy-11-deoxycorticosterone + 2 oxidized [adrenodoxin] + H2O. The catalysed reaction is 21-hydroxyprogesterone + 2 reduced [adrenodoxin] + O2 + 2 H(+) = 19-hydroxy-11-deoxycorticosterone + 2 oxidized [adrenodoxin] + H2O. It catalyses the reaction 11-deoxycortisol + 2 reduced [adrenodoxin] + O2 + 2 H(+) = cortisol + 2 oxidized [adrenodoxin] + H2O. It carries out the reaction cortisol + 2 reduced [adrenodoxin] + O2 + 2 H(+) = 18-hydroxycortisol + 2 oxidized [adrenodoxin] + H2O. The enzyme catalyses 11-deoxycortisol + 2 reduced [adrenodoxin] + O2 + 2 H(+) = 18-hydroxy-11-deoxycortisol + 2 oxidized [adrenodoxin] + H2O. It participates in steroid biosynthesis; glucocorticoid biosynthesis. It functions in the pathway steroid hormone biosynthesis. A cytochrome P450 monooxygenase involved in the biosynthesis of adrenal corticoids. Catalyzes a variety of reactions that are essential for many species, including detoxification, defense, and the formation of endogenous chemicals like steroid hormones. Steroid 11beta, 18- and 19-hydroxylase with preferred regioselectivity at 11beta, then 18, and lastly 19. Catalyzes the hydroxylation of 11-deoxycortisol and 11-deoxycorticosterone (21-hydroxyprogesterone) at 11beta position, yielding cortisol or corticosterone, respectively, but cannot produce aldosterone. Mechanistically, uses molecular oxygen inserting one oxygen atom into a substrate for hydroxylation and reducing the second into a water molecule. Two electrons are provided by NADPH via a two-protein mitochondrial transfer system comprising flavoprotein FDXR (adrenodoxin/ferredoxin reductase) and nonheme iron-sulfur protein FDX1 or FDX2 (adrenodoxin/ferredoxin). Due to its lack of 18-oxidation activity, it is incapable of generating aldosterone. Could also be involved in the androgen metabolic pathway. The chain is Cytochrome P450 11B1, mitochondrial (Cyp11b1) from Rattus norvegicus (Rat).